Reading from the N-terminus, the 551-residue chain is Palmdelphin (551 aa).

Met1 carries the post-translational modification N-acetylmethionine. Positions 12–106 (QAITDKRKIQ…LQISANEEVI (95 aa)) form a coiled coil. Lys125 participates in a covalent cross-link: Glycyl lysine isopeptide (Lys-Gly) (interchain with G-Cter in SUMO2). 2 positions are modified to phosphoserine: Ser135 and Ser163. Lys178 is covalently cross-linked (Glycyl lysine isopeptide (Lys-Gly) (interchain with G-Cter in SUMO1); alternate). Residue Lys178 forms a Glycyl lysine isopeptide (Lys-Gly) (interchain with G-Cter in SUMO2); alternate linkage. Positions 247–258 (ERNSKSPTEYHE) are enriched in basic and acidic residues. The segment at 247 to 267 (ERNSKSPTEYHEPVYANPFCR) is disordered. Thr270 is subject to Phosphothreonine. 2 disordered regions span residues 298 to 387 (HESE…CSSP) and 452 to 536 (EDDE…DPSL). Ser322, Ser350, Ser371, Ser376, Ser385, and Ser386 each carry phosphoserine. The span at 484–495 (KRSEVSPHENTN) shows a compositional bias: basic and acidic residues. Phosphoserine occurs at positions 498, 515, and 520.

It belongs to the paralemmin family. Interacts with GLUL. Post-translationally, phosphorylated. Expressed in the brain and the spinal cord. Expressed in the anterior olfactory nucleus, the olfactory tubercle, the nucleus supraopticus, the nucleus of the lateral olfactory tract, the piriform cortex, the cortico-amygdaloid transition zone, the septofimbrial nucleus and the indusium griseum (at protein level).

It is found in the cytoplasm. The protein localises to the cell projection. It localises to the dendrite. The protein resides in the dendritic spine. This is Palmdelphin (Palmd) from Rattus norvegicus (Rat).